A 1368-amino-acid chain; its full sequence is DNA-directed RNA polymerase subunit beta (1368 aa).

Belongs to the RNA polymerase beta chain family. The RNAP catalytic core consists of 2 alpha, 1 beta, 1 beta' and 1 omega subunit. When a sigma factor is associated with the core the holoenzyme is formed, which can initiate transcription.

It carries out the reaction RNA(n) + a ribonucleoside 5'-triphosphate = RNA(n+1) + diphosphate. DNA-dependent RNA polymerase catalyzes the transcription of DNA into RNA using the four ribonucleoside triphosphates as substrates. In Burkholderia multivorans (strain ATCC 17616 / 249), this protein is DNA-directed RNA polymerase subunit beta.